A 556-amino-acid polypeptide reads, in one-letter code: Formate--tetrahydrofolate ligase (556 aa).

Residue 65–72 (TAAGEGKS) coordinates ATP.

Belongs to the formate--tetrahydrofolate ligase family.

It catalyses the reaction (6S)-5,6,7,8-tetrahydrofolate + formate + ATP = (6R)-10-formyltetrahydrofolate + ADP + phosphate. Its pathway is one-carbon metabolism; tetrahydrofolate interconversion. The chain is Formate--tetrahydrofolate ligase from Elusimicrobium minutum (strain Pei191).